The following is a 231-amino-acid chain: Ribosomal RNA small subunit methyltransferase G (231 aa).

Residues Gly-75, Phe-80, 126-127 (AE), and Arg-142 each bind S-adenosyl-L-methionine.

This sequence belongs to the methyltransferase superfamily. RNA methyltransferase RsmG family.

The protein resides in the cytoplasm. Functionally, specifically methylates the N7 position of a guanine in 16S rRNA. In Mycoplasma capricolum subsp. capricolum (strain California kid / ATCC 27343 / NCTC 10154), this protein is Ribosomal RNA small subunit methyltransferase G.